We begin with the raw amino-acid sequence, 447 residues long: Rab GDP dissociation inhibitor alpha (447 aa).

Ser-427 is modified (phosphoserine).

The protein belongs to the Rab GDI family. As to quaternary structure, interacts with RHOH. Interacts with the non-phosphorylated forms of RAB1A, RAB3A, RAB5A, RAB5B, RAB5C, RAB8A, RAB8B, RAB10, RAB12, RAB35, and RAB43. Interacts with RAB3A.

Its subcellular location is the cytoplasm. The protein resides in the golgi apparatus. It localises to the trans-Golgi network. Regulates the GDP/GTP exchange reaction of most Rab proteins by inhibiting the dissociation of GDP from them, and the subsequent binding of GTP to them. Promotes the dissociation of GDP-bound Rab proteins from the membrane and inhibits their activation. Promotes the dissociation of RAB1A, RAB3A, RAB5A and RAB10 from membranes. This Bos taurus (Bovine) protein is Rab GDP dissociation inhibitor alpha (GDI1).